Reading from the N-terminus, the 101-residue chain is Small ribosomal subunit protein uS14 (101 aa).

It belongs to the universal ribosomal protein uS14 family. Part of the 30S ribosomal subunit. Contacts proteins S3 and S10.

Binds 16S rRNA, required for the assembly of 30S particles and may also be responsible for determining the conformation of the 16S rRNA at the A site. This is Small ribosomal subunit protein uS14 from Nitrosomonas europaea (strain ATCC 19718 / CIP 103999 / KCTC 2705 / NBRC 14298).